The following is a 183-amino-acid chain: Transmembrane protein 52B (183 aa).

The first 24 residues, Met-1 to Cys-24, serve as a signal peptide directing secretion. A helical transmembrane segment spans residues Val-40–Leu-60. The disordered stretch occupies residues Asp-158 to Asn-183. Basic and acidic residues predominate over residues Pro-163–Arg-177.

The protein localises to the membrane. The chain is Transmembrane protein 52B (TMEM52B) from Homo sapiens (Human).